The primary structure comprises 208 residues: Uracil phosphoribosyltransferase (208 aa).

Residues R78, R103, and 130–138 contribute to the 5-phospho-alpha-D-ribose 1-diphosphate site; that span reads DPMLATGGT. Uracil-binding positions include I193 and 198 to 200; that span reads GDA. Position 199 (D199) interacts with 5-phospho-alpha-D-ribose 1-diphosphate.

Belongs to the UPRTase family. Requires Mg(2+) as cofactor.

It catalyses the reaction UMP + diphosphate = 5-phospho-alpha-D-ribose 1-diphosphate + uracil. It participates in pyrimidine metabolism; UMP biosynthesis via salvage pathway; UMP from uracil: step 1/1. With respect to regulation, allosterically activated by GTP. In terms of biological role, catalyzes the conversion of uracil and 5-phospho-alpha-D-ribose 1-diphosphate (PRPP) to UMP and diphosphate. The polypeptide is Uracil phosphoribosyltransferase (Oleidesulfovibrio alaskensis (strain ATCC BAA-1058 / DSM 17464 / G20) (Desulfovibrio alaskensis)).